Here is a 929-residue protein sequence, read N- to C-terminus: Isoleucine--tRNA ligase (929 aa).

Residues 58-68 (PYANGDIHIGH) carry the 'HIGH' region motif. E563 contacts L-isoleucyl-5'-AMP. Residues 605 to 609 (KMSKS) carry the 'KMSKS' region motif. K608 is a binding site for ATP. Zn(2+) contacts are provided by C892, C895, C912, and C915.

The protein belongs to the class-I aminoacyl-tRNA synthetase family. IleS type 1 subfamily. Monomer. The cofactor is Zn(2+).

It localises to the cytoplasm. It carries out the reaction tRNA(Ile) + L-isoleucine + ATP = L-isoleucyl-tRNA(Ile) + AMP + diphosphate. Functionally, catalyzes the attachment of isoleucine to tRNA(Ile). As IleRS can inadvertently accommodate and process structurally similar amino acids such as valine, to avoid such errors it has two additional distinct tRNA(Ile)-dependent editing activities. One activity is designated as 'pretransfer' editing and involves the hydrolysis of activated Val-AMP. The other activity is designated 'posttransfer' editing and involves deacylation of mischarged Val-tRNA(Ile). The polypeptide is Isoleucine--tRNA ligase (Neisseria meningitidis serogroup B (strain ATCC BAA-335 / MC58)).